We begin with the raw amino-acid sequence, 100 residues long: Small ribosomal subunit protein bS20 (100 aa).

The interval 79 to 100 (AAHQKSRLSAAVKQAIEPAPST) is disordered.

This sequence belongs to the bacterial ribosomal protein bS20 family.

Its function is as follows. Binds directly to 16S ribosomal RNA. This is Small ribosomal subunit protein bS20 from Prochlorococcus marinus (strain MIT 9303).